A 310-amino-acid polypeptide reads, in one-letter code: Protein LRATD2 (310 aa).

The segment at 1–76 (MGNQVEKLTH…PPPQPQPYDP (76 aa)) is disordered. Residues 54–64 (PDGGGLPDGGD) are compositionally biased toward gly residues. Over residues 65–74 (GPPPPQPQPY) the composition is skewed to pro residues. Positions 122–217 (VEFVSQAQYP…CRYGKREFKI (96 aa)) constitute an LRAT domain. The segment at 274–310 (HPAEPEEGDSNVARTTPPPGRPPAPSSEEEDGEAVAH) is disordered. Residues 289–298 (TPPPGRPPAP) show a composition bias toward pro residues. The segment covering 300–310 (SEEEDGEAVAH) has biased composition (acidic residues).

It belongs to the LRATD family. As to expression, expressed in esophageal squamous cell carcinomas.

This Homo sapiens (Human) protein is Protein LRATD2.